The following is a 141-amino-acid chain: Large ribosomal subunit protein uL11 (141 aa).

This sequence belongs to the universal ribosomal protein uL11 family. Part of the ribosomal stalk of the 50S ribosomal subunit. Interacts with L10 and the large rRNA to form the base of the stalk. L10 forms an elongated spine to which L12 dimers bind in a sequential fashion forming a multimeric L10(L12)X complex. Post-translationally, one or more lysine residues are methylated.

Forms part of the ribosomal stalk which helps the ribosome interact with GTP-bound translation factors. The protein is Large ribosomal subunit protein uL11 of Synechococcus sp. (strain CC9311).